We begin with the raw amino-acid sequence, 400 residues long: Formate-dependent phosphoribosylglycinamide formyltransferase (400 aa).

N(1)-(5-phospho-beta-D-ribosyl)glycinamide contacts are provided by residues 22–23 (EL) and E82. ATP is bound by residues R115, K156, 161 to 166 (SSGKGQ), 196 to 199 (EGFI), and E204. Residues 120–309 (RLAAETLGLP…EFALHARAIL (190 aa)) form the ATP-grasp domain. The Mg(2+) site is built by E268 and E280. Residues D287, K361, and 368–369 (RR) contribute to the N(1)-(5-phospho-beta-D-ribosyl)glycinamide site.

It belongs to the PurK/PurT family. In terms of assembly, homodimer.

It carries out the reaction N(1)-(5-phospho-beta-D-ribosyl)glycinamide + formate + ATP = N(2)-formyl-N(1)-(5-phospho-beta-D-ribosyl)glycinamide + ADP + phosphate + H(+). It functions in the pathway purine metabolism; IMP biosynthesis via de novo pathway; N(2)-formyl-N(1)-(5-phospho-D-ribosyl)glycinamide from N(1)-(5-phospho-D-ribosyl)glycinamide (formate route): step 1/1. In terms of biological role, involved in the de novo purine biosynthesis. Catalyzes the transfer of formate to 5-phospho-ribosyl-glycinamide (GAR), producing 5-phospho-ribosyl-N-formylglycinamide (FGAR). Formate is provided by PurU via hydrolysis of 10-formyl-tetrahydrofolate. The polypeptide is Formate-dependent phosphoribosylglycinamide formyltransferase (Xanthomonas oryzae pv. oryzae (strain PXO99A)).